The primary structure comprises 598 residues: Elongation factor 4 (598 aa).

Residues 4–185 enclose the tr-type G domain; the sequence is KNIRNFSIIA…TIIAKIPPPK (182 aa). Residues 16-21 and 132-135 contribute to the GTP site; these read DHGKST and NKID.

It belongs to the TRAFAC class translation factor GTPase superfamily. Classic translation factor GTPase family. LepA subfamily.

The protein resides in the cell membrane. It carries out the reaction GTP + H2O = GDP + phosphate + H(+). Its function is as follows. Required for accurate and efficient protein synthesis under certain stress conditions. May act as a fidelity factor of the translation reaction, by catalyzing a one-codon backward translocation of tRNAs on improperly translocated ribosomes. Back-translocation proceeds from a post-translocation (POST) complex to a pre-translocation (PRE) complex, thus giving elongation factor G a second chance to translocate the tRNAs correctly. Binds to ribosomes in a GTP-dependent manner. In Mycoplasma genitalium (strain ATCC 33530 / DSM 19775 / NCTC 10195 / G37) (Mycoplasmoides genitalium), this protein is Elongation factor 4.